The sequence spans 431 residues: Serine--tRNA ligase (431 aa).

Residue 238 to 240 participates in L-serine binding; sequence TAE. 269–271 contacts ATP; it reads RSE. Residue E292 coordinates L-serine. 356-359 contacts ATP; sequence EISS. S392 lines the L-serine pocket.

This sequence belongs to the class-II aminoacyl-tRNA synthetase family. Type-1 seryl-tRNA synthetase subfamily. As to quaternary structure, homodimer. The tRNA molecule binds across the dimer.

It is found in the cytoplasm. It catalyses the reaction tRNA(Ser) + L-serine + ATP = L-seryl-tRNA(Ser) + AMP + diphosphate + H(+). The catalysed reaction is tRNA(Sec) + L-serine + ATP = L-seryl-tRNA(Sec) + AMP + diphosphate + H(+). It functions in the pathway aminoacyl-tRNA biosynthesis; selenocysteinyl-tRNA(Sec) biosynthesis; L-seryl-tRNA(Sec) from L-serine and tRNA(Sec): step 1/1. Functionally, catalyzes the attachment of serine to tRNA(Ser). Is also able to aminoacylate tRNA(Sec) with serine, to form the misacylated tRNA L-seryl-tRNA(Sec), which will be further converted into selenocysteinyl-tRNA(Sec). This is Serine--tRNA ligase from Pectobacterium atrosepticum (strain SCRI 1043 / ATCC BAA-672) (Erwinia carotovora subsp. atroseptica).